Consider the following 1470-residue polypeptide: Rap guanine nucleotide exchange factor (1470 aa).

Disordered regions lie at residues 130–227 (PTEP…SYND) and 250–313 (HRRE…GGFM). The span at 173 to 183 (MPPPPVPPRPL) shows a compositional bias: pro residues. 2 stretches are compositionally biased toward low complexity: residues 184–193 (RLPQTAAKGP) and 215–224 (TTSSSSSNTS). A compositionally biased stretch (polar residues) spans 256–266 (NSVGGQAQNGI). Over residues 275 to 292 (RSTASSTTTEGETASNEG) the composition is skewed to low complexity. 347–463 (AFAALPMSIK…IEKDRDGLTG (117 aa)) provides a ligand contact to a nucleoside 3',5'-cyclic phosphate. In terms of domain architecture, N-terminal Ras-GEF spans 478-592 (CGQVLIKGKP…SLLNIACSVK (115 aa)). The 83-residue stretch at 597–679 (QVILTRRKDD…LTLMLKNNVL (83 aa)) folds into the PDZ domain. Positions 782-869 (PEHVLKIYRN…SRYYLKNNSR (88 aa)) constitute a Ras-associating domain. Residues 894–1124 (NAQVVAAQLT…FENSNVATMR (231 aa)) enclose the Ras-GEF domain. The span at 1176-1189 (QTAHRGANSSSTAN) shows a compositional bias: polar residues. Disordered regions lie at residues 1176 to 1213 (QTAHRGANSSSTANIRRVPSPTPSSLSSQSAGSADQSS), 1253 to 1326 (KVKG…NIPP), 1347 to 1370 (VIPTHPHGHSPTSPRCRSRSPASS), and 1422 to 1455 (ATLPNHVSPRGLPPKSRPTILPGSHTNSSSRMGT). The span at 1198–1211 (PSSLSSQSAGSADQ) shows a compositional bias: low complexity. 2 stretches are compositionally biased toward polar residues: residues 1260–1274 (QITSPSTSARSSLQR) and 1282–1308 (RQATSSAQGPVQLNEETSTVTTYYQSD). Over residues 1309–1321 (NGRRQRSGSEGRF) the composition is skewed to basic and acidic residues. The span at 1349-1370 (PTHPHGHSPTSPRCRSRSPASS) shows a compositional bias: low complexity.

This sequence belongs to the RAPGEF2 family. In terms of tissue distribution, expressed in hermaphrodite-specific neurons (HSNs), oviduct sheath cells and lateral seam cells.

Its function is as follows. Acts as a guanine nucleotide exchange factor for small G protein GTPases like rap-1 and rap-2. Required in the hypodermis, especially in the seam cells, for proper formation of the cuticle. This is Rap guanine nucleotide exchange factor (pxf-1) from Caenorhabditis elegans.